Here is a 991-residue protein sequence, read N- to C-terminus: MPEYMINGIPVNFPFEPYELQKNYMAKVIECLQNKTNGVLESPTGTGKTLSLLCSSMAWLLHMKSKQPKHRMETIDTLPEPPELSNAKHAALDPEQALALQQQKANAKMKIIYASRTHSQLSQAMQELKNTSYLFVRSIILGSRDQLCIHPDISKQENNAIKTVLCRESVKARNCSFYNRVETAKDRPDVATVPVMDIEDLVTVGRKLKACPYYLSKELVEQADVIFMPYNYLLDPKARKSNGLSLQNTVIILDEAHNVEKMCEEVGSALLRSSDIALAIEDTSSVIKSMMDGGGAWTGDGEKQLELTLDDLVLLKEILLGVEKAVDDIPILFSQGGTTHPGTYIFDLLEKANIKFGNINVVLQVMNSLITHITTEKTGGFVRRGAGLQSMVDFLEVVFASSGPEYRQAVEKCFRVHIEPEEPKQLAKGGVKRADGWTATKQPLKAPVKSTSKVINFWCFNPGFGMRQLVDSGTRSIILTSGTLAPLKPFISELSLPVAVSLENPHIIARSQVYVKVITHGPDRVELNSSFKNRSNPEYIASLGRTALSLCPIIPGGLLIFFPSYPLLNKCSEEWQASGIWGQISRLKQIFVEPRGKDQFTTTMAEYYAQVRDPASRGAIFMAVCRGKVSEGLDFADANGRAVMITGLPFPPMMDARVVLKKQYLDTNRTRENELITGNDWYSLEASRAVNQAIGRVIRHKDDYGAILLCDSRFQNARQQAQLSAWIHSHLRESSAVPNFGTVVGEMSRFFRHMSTASLPARVRDVCAVKDEPAEAAKEEPGKGKRFATAVKGGGINTFAEKFRLSEYLPDSMKVNPHSRSTKSAGDDAEAGGSGLVTLYKRERNDGKGPPPSPGAFEATRKRRKIVIVPQPLVKREDTEDGENVLLPVKQEPDVAAAANVKRVAPENRVDFLREVKCSLSAGSYKTFLQSLAVYNRNSDFVLFIKQLCSCFNKPHLHYLLLAMRRFIKQEHTLEFDTIIEKIEARFFSDM.

The Helicase ATP-binding domain maps to 7 to 319; sequence NGIPVNFPFE…DDLVLLKEIL (313 aa). 42–49 is a binding site for ATP; it reads SPTGTGKT. Residues C148, C166, C175, and C211 each contribute to the [4Fe-4S] cluster site. A DEAH box motif is present at residues 254 to 257; it reads DEAH. A disordered region spans residues 812–833; it reads SMKVNPHSRSTKSAGDDAEAGG.

It belongs to the helicase family. RAD3/XPD subfamily.

The protein resides in the nucleus. The enzyme catalyses ATP + H2O = ADP + phosphate + H(+). A probable ATP-dependent DNA helicase implicated in DNA repair and the maintenance of genomic stability. Acts as an anti-recombinase to counteract toxic recombination and limit crossover during meiosis. Regulates meiotic recombination and crossover homeostasis by physically dissociating strand invasion events and thereby promotes noncrossover repair by meiotic synthesis dependent strand annealing (SDSA) as well as disassembly of D loop recombination intermediates. The sequence is that of Regulator of telomere elongation helicase 1 homolog from Anopheles gambiae (African malaria mosquito).